Here is a 53-residue protein sequence, read N- to C-terminus: uncharacterized protein (53 aa).

The helical transmembrane segment at 13–35 (FLLHSFTFPIAHCPSFSWASFFF) threads the bilayer.

It is found in the membrane. This is an uncharacterized protein from Saccharomyces cerevisiae (strain ATCC 204508 / S288c) (Baker's yeast).